The primary structure comprises 552 residues: Antibiotic resistance protein MAB_2355c (552 aa).

2 ABC transporter domains span residues valine 4–aspartate 270 and alanine 332–valine 552. ATP-binding positions include glycine 37–threonine 44 and glycine 364–serine 371.

It belongs to the ABC transporter superfamily. ABCF family.

The enzyme catalyses ATP + H2O = ADP + phosphate + H(+). Its activity is regulated as follows. The ATPase activity can be inhibited by ribosome-targeting antibiotics. Functionally, exhibits ATP hydrolysis activity and contributes to macrolide resistance by ribosome protection. Can also hydrolyze GTP, TTP and CTP but to a lesser extent than ATP. In vitro, rescues the transcription and translation activities affected by macrolides. Increased expression correlates with increased resistance to clarithromycin, one of the main drugs used to treat M.abscessus. This is Antibiotic resistance protein MAB_2355c from Mycobacteroides abscessus (strain ATCC 19977 / DSM 44196 / CCUG 20993 / CIP 104536 / JCM 13569 / NCTC 13031 / TMC 1543 / L948) (Mycobacterium abscessus).